Reading from the N-terminus, the 637-residue chain is Neuroendocrine convertase 2 (637 aa).

Residues 1–24 (MEGGCGSQWKAAGFLFCVMVFASA) form the signal peptide. Positions 25–108 (ERPVFTNHFL…QQEGFDRKKR (84 aa)) are excised as a propeptide. The region spanning 128–452 (QWYLFNTGQA…YGVLDAGAMV (325 aa)) is the Peptidase S8 domain. Residues Asp166 and His207 each act as charge relay system in the active site. 2 cysteine pairs are disulfide-bonded: Cys224–Cys375 and Cys316–Cys346. Asn374 carries N-linked (GlcNAc...) asparagine glycosylation. Ser383 (charge relay system) is an active-site residue. Residues 460 to 596 (TVPERFHCVG…TLMLHGTQSA (137 aa)) form the P/Homo B domain. The cysteines at positions 467 and 493 are disulfide-linked. N-linked (GlcNAc...) asparagine glycosylation is found at Asn513 and Asn523.

This sequence belongs to the peptidase S8 family. Furin subfamily.

Its subcellular location is the cytoplasmic vesicle. It is found in the secretory vesicle. The protein localises to the secreted. It carries out the reaction Release of protein hormones and neuropeptides from their precursors, generally by hydrolysis of -Lys-Arg-|- bonds.. Its function is as follows. Serine endopeptidase which is involved in the processing of hormone and other protein precursors at sites comprised of pairs of basic amino acid residues. Responsible for the release of glucagon from proglucagon in pancreatic A cells. This chain is Neuroendocrine convertase 2 (Pcsk2), found in Mus musculus (Mouse).